The following is a 368-amino-acid chain: Ribosomal RNA large subunit methyltransferase M (368 aa).

Residues serine 199, 232–235 (APGG), aspartate 251, aspartate 271, and aspartate 287 each bind S-adenosyl-L-methionine. Residue lysine 316 is the Proton acceptor of the active site.

It belongs to the class I-like SAM-binding methyltransferase superfamily. RNA methyltransferase RlmE family. RlmM subfamily. As to quaternary structure, monomer.

Its subcellular location is the cytoplasm. It catalyses the reaction cytidine(2498) in 23S rRNA + S-adenosyl-L-methionine = 2'-O-methylcytidine(2498) in 23S rRNA + S-adenosyl-L-homocysteine + H(+). In terms of biological role, catalyzes the 2'-O-methylation at nucleotide C2498 in 23S rRNA. This Aromatoleum aromaticum (strain DSM 19018 / LMG 30748 / EbN1) (Azoarcus sp. (strain EbN1)) protein is Ribosomal RNA large subunit methyltransferase M.